The chain runs to 258 residues: Indole-3-glycerol phosphate synthase (258 aa).

This sequence belongs to the TrpC family.

It carries out the reaction 1-(2-carboxyphenylamino)-1-deoxy-D-ribulose 5-phosphate + H(+) = (1S,2R)-1-C-(indol-3-yl)glycerol 3-phosphate + CO2 + H2O. The protein operates within amino-acid biosynthesis; L-tryptophan biosynthesis; L-tryptophan from chorismate: step 4/5. The protein is Indole-3-glycerol phosphate synthase of Campylobacter jejuni subsp. jejuni serotype O:23/36 (strain 81-176).